The chain runs to 256 residues: Ribosomal RNA large subunit methyltransferase E (256 aa).

5 residues coordinate S-adenosyl-L-methionine: Gly48, Trp50, Asp68, Asp86, and Asp111. Lys151 acts as the Proton acceptor in catalysis. The region spanning Pro198–Glu256 is the TRAM domain.

The protein belongs to the class I-like SAM-binding methyltransferase superfamily. RNA methyltransferase RlmE family.

The protein localises to the cytoplasm. It carries out the reaction uridine(2552) in 23S rRNA + S-adenosyl-L-methionine = 2'-O-methyluridine(2552) in 23S rRNA + S-adenosyl-L-homocysteine + H(+). Functionally, specifically methylates the uridine in position 2552 of 23S rRNA at the 2'-O position of the ribose in the fully assembled 50S ribosomal subunit. The protein is Ribosomal RNA large subunit methyltransferase E of Haloquadratum walsbyi (strain DSM 16790 / HBSQ001).